The primary structure comprises 462 residues: Integrator complex subunit 12 (462 aa).

Residues 42 to 132 (GIDSSYRPSQ…PETQSSPITV (91 aa)) form a disordered region. A compositionally biased stretch (polar residues) spans 59–86 (ISSTKNISIKQEPKISSSLPSGNNNGKV). A Glycyl lysine isopeptide (Lys-Gly) (interchain with G-Cter in SUMO2) cross-link involves residue K68. Residues 88–124 (TTEKVKKEAEKRPADKMKSDITEGVDIPKKPRLEKPE) are compositionally biased toward basic and acidic residues. The residue at position 128 (S128) is a Phosphoserine. Residues 159-215 (GLACVVCRQMMVASGNQLVECQECHNLYHRDCHKPQVTDKEANDPRLVWYCARCTRQ) form a PHD-type zinc finger. K254 participates in a covalent cross-link: Glycyl lysine isopeptide (Lys-Gly) (interchain with G-Cter in SUMO2). Over residues 301–328 (SSAGPSTAKLSSTTQNNTGKPATSSANQ) the composition is skewed to polar residues. Residues 301–462 (SSAGPSTAKL…KKAAQKKLKK (162 aa)) form a disordered region. 2 stretches are compositionally biased toward low complexity: residues 347–358 (KIGSNNSTTPTV) and 382–437 (VSKV…GPTS). Over residues 449-462 (QMVKKKAAQKKLKK) the composition is skewed to basic residues.

It belongs to the Integrator subunit 12 family. In terms of assembly, component of the Integrator complex, composed of core subunits INTS1, INTS2, INTS3, INTS4, INTS5, INTS6, INTS7, INTS8, INTS9/RC74, INTS10, INTS11/CPSF3L, INTS12, INTS13, INTS14 and INTS15. The core complex associates with protein phosphatase 2A subunits PPP2CA and PPP2R1A, to form the Integrator-PP2A (INTAC) complex. Dephosphorylated at Ser-128 by the PNUTS-PP1 complex, promoting RNA polymerase II transcription pause-release.

It localises to the nucleus. In terms of biological role, component of the integrator complex, a multiprotein complex that terminates RNA polymerase II (Pol II) transcription in the promoter-proximal region of genes. The integrator complex provides a quality checkpoint during transcription elongation by driving premature transcription termination of transcripts that are unfavorably configured for transcriptional elongation: the complex terminates transcription by (1) catalyzing dephosphorylation of the C-terminal domain (CTD) of Pol II subunit POLR2A/RPB1 and SUPT5H/SPT5, (2) degrading the exiting nascent RNA transcript via endonuclease activity and (3) promoting the release of Pol II from bound DNA. The integrator complex is also involved in terminating the synthesis of non-coding Pol II transcripts, such as enhancer RNAs (eRNAs), small nuclear RNAs (snRNAs), telomerase RNAs and long non-coding RNAs (lncRNAs). Mediates recruitment of cytoplasmic dynein to the nuclear envelope, probably as component of the integrator complex. The polypeptide is Integrator complex subunit 12 (INTS12) (Pongo abelii (Sumatran orangutan)).